The sequence spans 38 residues: Conotoxin FVIA (38 aa).

Residues 1-12 constitute a propeptide that is removed on maturation; it reads ILSLSLLDRSTR. Intrachain disulfides connect cysteine 13–cysteine 28, cysteine 20–cysteine 32, and cysteine 27–cysteine 37. Position 37 is a cysteine amide (cysteine 37).

It belongs to the conotoxin O1 superfamily. In terms of tissue distribution, expressed by the venom duct.

The protein localises to the secreted. Its function is as follows. Omega-conotoxins act at presynaptic membranes, they bind and block voltage-gated calcium channels (Cav). This peptide reversibly and selectively inhibits Cav2.2/CACNA1B (IC(50)=11.5 nM) voltage-gated calcium channels. Channel time recovery after toxin exposure is short (about 50 seconds). In vivo, it effectively and dose-dependently reduces nociceptive behavior in the formalin test and in neuropathic pain models, and reduces mechanical and thermal allodynia in the tail nerve injury rat model. It also shows significant analgesic effects on writhing in mouse neurotransmitter- and cytokine-induced pain models, though it has no effect on acute thermal pain and interferon-gamma-induced pain. It also depresses blood pressure immediately after administration, but pressure recovers relatively quickly and completely. The sequence is that of Conotoxin FVIA from Conus fulmen (Thunderbolt cone).